The following is a 945-amino-acid chain: Alanine--tRNA ligase (945 aa).

The Zn(2+) site is built by H564, H568, C666, and H670. The interval 911-945 (SGGGRPDMAQAGGKDASKLPEALQQARETMTEKLG) is disordered.

Belongs to the class-II aminoacyl-tRNA synthetase family. Zn(2+) serves as cofactor.

The protein localises to the cytoplasm. It catalyses the reaction tRNA(Ala) + L-alanine + ATP = L-alanyl-tRNA(Ala) + AMP + diphosphate. In terms of biological role, catalyzes the attachment of alanine to tRNA(Ala) in a two-step reaction: alanine is first activated by ATP to form Ala-AMP and then transferred to the acceptor end of tRNA(Ala). Also edits incorrectly charged Ser-tRNA(Ala) and Gly-tRNA(Ala) via its editing domain. This Rhodopirellula baltica (strain DSM 10527 / NCIMB 13988 / SH1) protein is Alanine--tRNA ligase.